A 144-amino-acid polypeptide reads, in one-letter code: Large ribosomal subunit protein uL15 (144 aa).

The segment covering methionine 1–histidine 13 has biased composition (basic residues). Positions methionine 1–asparagine 32 are disordered.

This sequence belongs to the universal ribosomal protein uL15 family. Part of the 50S ribosomal subunit.

Binds to the 23S rRNA. This chain is Large ribosomal subunit protein uL15, found in Thermoplasma acidophilum (strain ATCC 25905 / DSM 1728 / JCM 9062 / NBRC 15155 / AMRC-C165).